The primary structure comprises 337 residues: Anthranilate phosphoribosyltransferase (337 aa).

5-phospho-alpha-D-ribose 1-diphosphate is bound by residues Gly-81, Gly-84–Asp-85, Ser-89, Asn-91–Thr-94, Lys-109–Ser-117, and Ala-121. Gly-81 lines the anthranilate pocket. Position 93 (Ser-93) interacts with Mg(2+). Residue Asn-112 participates in anthranilate binding. Residue Arg-167 coordinates anthranilate. Residues Asp-226 and Glu-227 each contribute to the Mg(2+) site.

Belongs to the anthranilate phosphoribosyltransferase family. In terms of assembly, homodimer. Requires Mg(2+) as cofactor.

It catalyses the reaction N-(5-phospho-beta-D-ribosyl)anthranilate + diphosphate = 5-phospho-alpha-D-ribose 1-diphosphate + anthranilate. Its pathway is amino-acid biosynthesis; L-tryptophan biosynthesis; L-tryptophan from chorismate: step 2/5. Functionally, catalyzes the transfer of the phosphoribosyl group of 5-phosphorylribose-1-pyrophosphate (PRPP) to anthranilate to yield N-(5'-phosphoribosyl)-anthranilate (PRA). This Bradyrhizobium diazoefficiens (strain JCM 10833 / BCRC 13528 / IAM 13628 / NBRC 14792 / USDA 110) protein is Anthranilate phosphoribosyltransferase.